The primary structure comprises 171 residues: UPF0398 protein MGAS9429_Spy1349 (171 aa).

It belongs to the UPF0398 family.

In Streptococcus pyogenes serotype M12 (strain MGAS9429), this protein is UPF0398 protein MGAS9429_Spy1349.